A 550-amino-acid chain; its full sequence is uncharacterized protein (550 aa).

An N-terminal signal peptide occupies residues 1–53; that stretch reads MVVIANKGALWAYYCKRLLNSVTYMMYPLIRKRTMKKLLLIVGLLLACSTVMR. Residues Asn-296 and Asn-518 are each glycosylated (N-linked (GlcNAc...) asparagine).

It localises to the endoplasmic reticulum. This is an uncharacterized protein from Schizosaccharomyces pombe (strain 972 / ATCC 24843) (Fission yeast).